Consider the following 463-residue polypeptide: Argininosuccinate lyase (463 aa).

This sequence belongs to the lyase 1 family. Argininosuccinate lyase subfamily.

Its subcellular location is the cytoplasm. The catalysed reaction is 2-(N(omega)-L-arginino)succinate = fumarate + L-arginine. Its pathway is amino-acid biosynthesis; L-arginine biosynthesis; L-arginine from L-ornithine and carbamoyl phosphate: step 3/3. The chain is Argininosuccinate lyase from Chlorobaculum parvum (strain DSM 263 / NCIMB 8327) (Chlorobium vibrioforme subsp. thiosulfatophilum).